The sequence spans 258 residues: MAIELGERISTSVGFLAELFLMKIPLFTVIVALLTIILGIVNIFLPIVDFFGLSWHNLINIRLHTLNTYPLVHHGVISFILGLLGIFLLMPRFERRYGTLCTIAMFFGFLEVIPAIAYLIACYVAESDDVYVGIGGWVYSLLAMYLLNLFGDLHPKLLNLPQVVRMALALVAPVLGLPLDFSITIVLHLTAVVISIIFSFAYMDFFLPRGGFLVWVETKFSKIIDAIPNYISVTEAAYYQADGAIPIQDLGSNSSGIV.

The next 6 membrane-spanning stretches (helical) occupy residues 24-44, 70-90, 100-120, 130-150, 157-177, and 181-201; these read IPLF…VNIF, PLVH…FLLM, LCTI…AYLI, VYVG…LNLF, LLNL…VLGL, and FSIT…FSFA. The active site involves His188.

Belongs to the peptidase S54 family.

It is found in the golgi apparatus membrane. This is an uncharacterized protein from Schizosaccharomyces pombe (strain 972 / ATCC 24843) (Fission yeast).